The sequence spans 240 residues: Large ribosomal subunit protein uL3 (240 aa).

Disordered regions lie at residues 138–158 (SISH…KTFK) and 215–240 (EAPL…SAEG). Q151 carries the post-translational modification N5-methylglutamine.

The protein belongs to the universal ribosomal protein uL3 family. As to quaternary structure, part of the 50S ribosomal subunit. Forms a cluster with proteins L14 and L19. In terms of processing, methylated by PrmB.

Its function is as follows. One of the primary rRNA binding proteins, it binds directly near the 3'-end of the 23S rRNA, where it nucleates assembly of the 50S subunit. This Beijerinckia indica subsp. indica (strain ATCC 9039 / DSM 1715 / NCIMB 8712) protein is Large ribosomal subunit protein uL3.